The sequence spans 659 residues: Pheromone-processing carboxypeptidase kex1 (659 aa).

The signal sequence occupies residues 1-38; it reads MAATTTTTNAGRSMASWKRLSTLIAAFTLSWTSSFVAA. At 39-527 the chain is on the lumenal side; that stretch reads AGSADYFVHD…EMAKWEAYRK (489 aa). Residue Ser190 is part of the active site. 2 N-linked (GlcNAc...) asparagine glycosylation sites follow: Asn218 and Asn348. Residue Asp393 is part of the active site. N-linked (GlcNAc...) asparagine glycosylation is found at Asn444 and Asn452. Residue His455 is part of the active site. The segment at 480–507 is disordered; sequence IGGQPTDSRLDGEKLPETTVGGAAGNST. N-linked (GlcNAc...) asparagine glycosylation occurs at Asn505. Residues 528–548 traverse the membrane as a helical segment; the sequence is SGELVLVIVIVAAGVWGWFVW. Topologically, residues 549–659 are cytoplasmic; that stretch reads KERRKTAGQG…SSSRQPGGRS (111 aa). A disordered region spans residues 565–659; that stretch reads GERHSISNNP…SSSRQPGGRS (95 aa). A compositionally biased stretch (basic and acidic residues) spans 616–630; that stretch reads DDLHLSKPEDPHADS. Residues 649–659 are compositionally biased toward polar residues; that stretch reads GSSSRQPGGRS.

The protein belongs to the peptidase S10 family.

It localises to the golgi apparatus. It is found in the trans-Golgi network membrane. It catalyses the reaction Preferential release of a C-terminal arginine or lysine residue.. In terms of biological role, protease with a carboxypeptidase B-like function involved in the C-terminal processing of the lysine and arginine residues from protein precursors. Promotes cell fusion and is involved in the programmed cell death. The protein is Pheromone-processing carboxypeptidase kex1 (kex1) of Neurospora crassa (strain ATCC 24698 / 74-OR23-1A / CBS 708.71 / DSM 1257 / FGSC 987).